The chain runs to 309 residues: Putative ankyrin repeat protein R603 (309 aa).

ANK repeat units follow at residues 53 to 82 (QVNG…MNPE), 83 to 112 (NKSQ…DVSL), 114 to 144 (DHFA…DVTS), 145 to 176 (NNNL…DIHA), 177 to 206 (DEYF…DVNM), 214 to 243 (NVLS…DISF), and 245 to 274 (DDND…DISF).

The polypeptide is Putative ankyrin repeat protein R603 (Acanthamoeba polyphaga (Amoeba)).